We begin with the raw amino-acid sequence, 206 residues long: Thymidylate kinase (206 aa).

11 to 18 provides a ligand contact to ATP; that stretch reads GIDGAGKT.

This sequence belongs to the thymidylate kinase family.

The catalysed reaction is dTMP + ATP = dTDP + ADP. In terms of biological role, phosphorylation of dTMP to form dTDP in both de novo and salvage pathways of dTTP synthesis. This Burkholderia pseudomallei (strain 1106a) protein is Thymidylate kinase.